A 405-amino-acid polypeptide reads, in one-letter code: CMP-sialic acid transporter 4 (405 aa).

Residues 1-43 are Cytoplasmic-facing; the sequence is MQRNGVMECSVCHSKVVAPSPRSVSRAYDKHRSKISSKYRALN. The chain crosses the membrane as a helical span at residues 44–64; that stretch reads FLLVSGDCILVGLQPILVFMS. Residues 65 to 74 are Lumenal-facing; the sequence is KVDGKFQFSP. A helical transmembrane segment spans residues 75–95; sequence ISVNFLTEVTKVIFAIVMLII. At 96–121 the chain is on the cytoplasmic side; that stretch reads QSRKQKVGEKPLLSLSTFVQAARNNA. Residues 122–142 form a helical membrane-spanning segment; it reads LLAVPALLYAINNYLKFIMQL. Residue tyrosine 143 is a topological domain, lumenal. Residues 144–164 form a helical membrane-spanning segment; that stretch reads FSPATVKMLSNLKVLVIAILL. Residues 165–171 lie on the Cytoplasmic side of the membrane; it reads KFIMRRK. Residues 172-192 form a helical membrane-spanning segment; sequence FSIIQWEALALLLIGISVNQL. Over 193–203 the chain is Lumenal; the sequence is SSIPDGTKSFG. A helical membrane pass occupies residues 204–224; the sequence is LAVTTIAYIYTLIFVTVPSLA. At 225 to 244 the chain is on the cytoplasmic side; it reads SVYNEYALKSQFDTSIYLQN. The helical transmembrane segment at 245 to 265 threads the bilayer; it reads LFLYGYGAIFNFLGILGTVIF. At 266-281 the chain is on the lumenal side; that stretch reads QGPESFDILQGHSRAT. Residues 282–302 traverse the membrane as a helical segment; the sequence is MFLICNNAAQGILSSFFFKYA. Residues 303-322 lie on the Cytoplasmic side of the membrane; sequence DTILKKYSSTVATIFTGLAS. The chain crosses the membrane as a helical span at residues 323–343; it reads AAFLGHTLTVNFLLGISIVFI. Residues 344 to 405 lie on the Lumenal side of the membrane; the sequence is SMHQFFSPLA…TDERKPLLPI (62 aa). The tract at residues 386-405 is disordered; that stretch reads AADDASHLTSTDERKPLLPI. The span at 389–405 shows a compositional bias: basic and acidic residues; it reads DASHLTSTDERKPLLPI.

This sequence belongs to the nucleotide-sugar transporter family. CMP-Sialate:CMP antiporter (TC 2.A.7.12) subfamily.

Its subcellular location is the golgi apparatus membrane. Functionally, sugar transporter involved in the transport of CMP-sialic acid from the cytoplasm into the Golgi. May transport important nucleotide sugars such as CMP-Kdo (2-keto-3-deoxy-D-manno-octulosonic acid) in physiological conditions. This is CMP-sialic acid transporter 4 from Oryza sativa subsp. indica (Rice).